A 244-amino-acid polypeptide reads, in one-letter code: CTD nuclear envelope phosphatase 1 (244 aa).

The chain crosses the membrane as a helical span at residues 7 to 29; it reads LLGLRTFVAFAAKLWSFFIYLLR. Residues 57–224 form the FCP1 homology domain; the sequence is AQVKRKILVL…LNLLPMLDAL (168 aa).

Belongs to the dullard family. In terms of assembly, interacts with CNEP1R1; the complex dephosphorylates LPIN1 and LPIN2. As to expression, muscle specific with lower expression in other metabolic tissues.

It localises to the endoplasmic reticulum membrane. It is found in the nucleus membrane. It carries out the reaction O-phospho-L-seryl-[protein] + H2O = L-seryl-[protein] + phosphate. The catalysed reaction is O-phospho-L-threonyl-[protein] + H2O = L-threonyl-[protein] + phosphate. Functionally, serine/threonine protein phosphatase forming with CNEP1R1 an active phosphatase complex that dephosphorylates and may activate LPIN1 and LPIN2. LPIN1 and LPIN2 are phosphatidate phosphatases that catalyze the conversion of phosphatidic acid to diacylglycerol and control the metabolism of fatty acids at different levels. May indirectly modulate the lipid composition of nuclear and/or endoplasmic reticulum membranes and be required for proper nuclear membrane morphology and/or dynamics. May also indirectly regulate the production of lipid droplets and triacylglycerol. May antagonize BMP signaling. The sequence is that of CTD nuclear envelope phosphatase 1 (Ctdnep1) from Mus musculus (Mouse).